We begin with the raw amino-acid sequence, 285 residues long: 4-hydroxybenzoate octaprenyltransferase (285 aa).

9 consecutive transmembrane segments (helical) span residues 19 to 39, 42 to 62, 82 to 102, 104 to 124, 136 to 156, 166 to 186, 210 to 230, 233 to 253, and 265 to 285; these read IGSLLLLWPTLWALFLAADGL, WHVLIVFVLGVVFMRSAGCVI, LPSGLISSKEALSLFAVLVVC, FLLVLTMNTLTIMLSGIGIVL, YLPQFVLGLAFSWAIPMAYAA, WLLFVINALWTIAYDTQYAMV, IIGLLQLSVLALLIVLGSQLA, GIYYWGILAAAGFFVYQQWLI, and FLNNNYVGGLIFIAISASVLI.

This sequence belongs to the UbiA prenyltransferase family. Mg(2+) serves as cofactor.

Its subcellular location is the cell inner membrane. The catalysed reaction is all-trans-octaprenyl diphosphate + 4-hydroxybenzoate = 4-hydroxy-3-(all-trans-octaprenyl)benzoate + diphosphate. It participates in cofactor biosynthesis; ubiquinone biosynthesis. In terms of biological role, catalyzes the prenylation of para-hydroxybenzoate (PHB) with an all-trans polyprenyl group. Mediates the second step in the final reaction sequence of ubiquinone-8 (UQ-8) biosynthesis, which is the condensation of the polyisoprenoid side chain with PHB, generating the first membrane-bound Q intermediate 3-octaprenyl-4-hydroxybenzoate. The chain is 4-hydroxybenzoate octaprenyltransferase from Aliivibrio fischeri (strain ATCC 700601 / ES114) (Vibrio fischeri).